We begin with the raw amino-acid sequence, 250 residues long: mRNA-decapping protein g5R (250 aa).

A Nudix hydrolase domain is found at 97 to 243 (QKFRKNWLLP…IIGPAFNFIK (147 aa)). A Nudix box motif is present at residues 132 to 153 (GKPKEDESDLTCAIREFEEETG). Glu-138 is a Mg(2+) binding site. The active-site Nucleophile is Glu-147. Residues Glu-151 and Asp-173 each contribute to the Mg(2+) site.

The protein belongs to the Nudix hydrolase family. DIPP subfamily. As to quaternary structure, interacts with host RPL23A. It depends on Mg(2+) as a cofactor. Mn(2+) is required as a cofactor.

It is found in the host rough endoplasmic reticulum. The catalysed reaction is diphospho-myo-inositol polyphosphate + H2O = myo-inositol polyphosphate + phosphate.. In terms of biological role, decapping enzyme required for the removal of the 5'-end m7GpppN cap tethered to viral and host mRNAs to allow their decay in cells. May therefore accelerate viral and cellular mRNA turnover to eliminate competing host mRNAs and allow stage-specific synthesis of viral proteins. Acceleration of the turnover of cellular transcripts may even promote the shutoff of host protein synthesis. In addition to the mRNA cap, g5R also efficiently hydrolyzes diphosphoinositol polyphosphates. Down-regulation of the level of PP-InsP5 (diphosphoinositol pentakisphosphate) may play a role in viral manipulation of the cellular secretory pathway, a step necessary for the formation of virions. Binds viral and cellular poly(A) mRNAs, thereby decreasing both types of mRNAs. This chain is mRNA-decapping protein g5R, found in African swine fever virus (isolate Tick/South Africa/Pretoriuskop Pr4/1996) (ASFV).